A 543-amino-acid chain; its full sequence is CTP synthase (543 aa).

Residues 1–265 (MARYIFITGG…DDEVLAAFGI (265 aa)) are amidoligase domain. A CTP-binding site is contributed by Ser-13. Ser-13 contacts UTP. 14–19 (SLGKGL) lines the ATP pocket. Tyr-54 contributes to the L-glutamine binding site. Residue Asp-71 participates in ATP binding. The Mg(2+) site is built by Asp-71 and Glu-139. Residues 146–148 (DIE), 186–191 (KTKPTQ), and Lys-222 each bind CTP. UTP-binding positions include 186–191 (KTKPTQ) and Lys-222. 238-240 (RDA) contributes to the ATP binding site. The Glutamine amidotransferase type-1 domain maps to 291–542 (TIAIVGKYTG…IQAAVVQSRL (252 aa)). An L-glutamine-binding site is contributed by Gly-353. Residue Cys-380 is the Nucleophile; for glutamine hydrolysis of the active site. L-glutamine contacts are provided by residues 381–384 (FGMQ), Glu-404, and Arg-470. Residues His-515 and Glu-517 contribute to the active site.

The protein belongs to the CTP synthase family. Homotetramer.

The catalysed reaction is UTP + L-glutamine + ATP + H2O = CTP + L-glutamate + ADP + phosphate + 2 H(+). It catalyses the reaction L-glutamine + H2O = L-glutamate + NH4(+). The enzyme catalyses UTP + NH4(+) + ATP = CTP + ADP + phosphate + 2 H(+). The protein operates within pyrimidine metabolism; CTP biosynthesis via de novo pathway; CTP from UDP: step 2/2. Allosterically activated by GTP, when glutamine is the substrate; GTP has no effect on the reaction when ammonia is the substrate. The allosteric effector GTP functions by stabilizing the protein conformation that binds the tetrahedral intermediate(s) formed during glutamine hydrolysis. Inhibited by the product CTP, via allosteric rather than competitive inhibition. Functionally, catalyzes the ATP-dependent amination of UTP to CTP with either L-glutamine or ammonia as the source of nitrogen. Regulates intracellular CTP levels through interactions with the four ribonucleotide triphosphates. The sequence is that of CTP synthase from Nitrobacter winogradskyi (strain ATCC 25391 / DSM 10237 / CIP 104748 / NCIMB 11846 / Nb-255).